The sequence spans 212 residues: Thymidylate kinase (212 aa).

Residues 16–21, R97, R182, and K192 contribute to the ATP site; that span reads RAGKTT.

Belongs to the thymidylate kinase family. Requires Mg(2+) as cofactor.

It carries out the reaction dTMP + ATP = dTDP + ADP. Its pathway is pyrimidine metabolism; dTTP biosynthesis. Catalyzes the phosphorylation of thymidine monophosphate (dTMP) to thymidine diphosphate (dTDP), the immediate precursor for the DNA building block dTTP, with ATP as the preferred phosphoryl donor in the presence of Mg(2+). This Danio rerio (Zebrafish) protein is Thymidylate kinase (dtymk).